A 526-amino-acid polypeptide reads, in one-letter code: Putative UDP-glucuronosyltransferase ugt-48 (526 aa).

An N-terminal signal peptide occupies residues 1–17 (MLLRILTFLAVCQVTTS). Residues N58 and N305 are each glycosylated (N-linked (GlcNAc...) asparagine). The chain crosses the membrane as a helical span at residues 489 to 509 (FYNLDIIITAASIPVLIFIVL). N-linked (GlcNAc...) asparagine glycosylation is present at N513.

It belongs to the UDP-glycosyltransferase family. Interacts with cmd-1 in the presence of Ca(2+).

The protein localises to the membrane. It catalyses the reaction glucuronate acceptor + UDP-alpha-D-glucuronate = acceptor beta-D-glucuronoside + UDP + H(+). This is Putative UDP-glucuronosyltransferase ugt-48 (ugt-48) from Caenorhabditis elegans.